We begin with the raw amino-acid sequence, 102 residues long: FMRFamide-like neuropeptides 9 (102 aa).

Positions 1 to 19 (MNQFYALFLVACIAAMANA) are cleaved as a signal peptide. The propeptide occupies 20 to 63 (YEEPDLDALAEFCGKESNRKYCDQIAQLATQHAIGINQEQVRME). The residue at position 72 (Phe72) is a Phenylalanine amide. Residues 75 to 90 (RSGYPLVIDDEEMRMD) constitute a propeptide that is removed on maturation. The residue at position 99 (Phe99) is a Phenylalanine amide.

The protein belongs to the FARP (FMRFamide related peptide) family. As to expression, each flp gene is expressed in a distinct set of neurons.

The protein localises to the secreted. In terms of biological role, FMRFamides and FMRFamide-like peptides are neuropeptides. Functionally, KPSFVRF-amide: Has no effect on somatic body wall muscle, inhibits contraction of vaginal vera muscle, and inhibits the activity of the dissected pharyngeal myogenic muscle system. Acts as a ligand for the npr-22 receptor in vitro. This Caenorhabditis elegans protein is FMRFamide-like neuropeptides 9.